The following is an 816-amino-acid chain: MTGVCGCCGALRPRYKRLVDNIFPEDPEDGLVKANMEKLTFYALSAPEKLDRIGAYLSERLSRDVARHRYGYVCIAMEALDQLLMACHCQSINLFVESFLKMVRKLLEADKPNLQILGTNSFVKFANIEEDTPSYHRSYDFFVSRFSEMCHSGYEDPDIRTKIRMAGIKGLQGVVRKTVNDELQANIWDPQHMDKIVPSLLFNLQSGEGTESRSPSPLQASEKEKESPAELTERCFRELLGRAAYGNIKNAVTPVLMHLDNHSLWEGKTFAVRCFKIIMYSIQSQHSHLVIQQLLGHLDANSKSSATVRAGIVEVLLEVAAIAASGSVGPTVLEVFNTLLRHLRLSVDYELTGSYDCTNIGTKIIKEHEERQLQEAVIRTIGSFANTLPTYQRSEVMLFIMGKVPIPGLHPTLPSIGSGPEGNRMIQVMLLKSLRQVTCGFQTTNMLTALPNSFLDPMLSFALLEDAEIRLLVLEILVSLIDRHDNLPKFSNISIISDISVLKLKVDKCSRQDNLFMKKHAQHLYRHIYLCSKEQSSVQPHFEKLYSLLALISMELANEEVVVDLIRVALALQDLALSSEEMLPVYNRCAIHALSSAYLNLISQLTTVPAFCQHVHEVIEMRQKEIPYLLPEDVFIENPKIPKTLEKLEGDVLFQQAKITEVLGGSGYNTERLATPYVPQFTDEDRLSKRKSIGETISLQVEVDSRNSPEKEERTPAEEITFETLKNAIVDSVGVEEQEKERRRQVVEKFQKAPFEEIAAHCGARATMLQSKLNQIFEITIRPPPSPSGTITSSYGQTQSRSVPVYEMKFPDLCVY.

Residues 206 to 219 (SGEGTESRSPSPLQ) are compositionally biased toward polar residues. The tract at residues 206 to 230 (SGEGTESRSPSPLQASEKEKESPAE) is disordered. The segment covering 221–230 (SEKEKESPAE) has biased composition (basic and acidic residues).

It belongs to the EFR3 family. Component of a phosphatidylinositol 4-kinase (PI4K) complex. In terms of processing, palmitoylated at its N-terminus, anchoring the protein to the plasma membrane.

It is found in the cell membrane. Its function is as follows. Component of a complex required to localize phosphatidylinositol 4-kinase (PI4K) to the plasma membrane. The complex acts as a regulator of phosphatidylinositol 4-phosphate (PtdIns(4)P) synthesis. In the complex, efr3b probably acts as the membrane-anchoring component. The polypeptide is Protein EFR3 homolog B (efr3b) (Danio rerio (Zebrafish)).